A 716-amino-acid polypeptide reads, in one-letter code: Probable basic-leucine zipper transcription factor O (716 aa).

A coiled-coil region spans residues 20-142 (LLDDFSQLQQ…YQQRQQQYQD (123 aa)). The tract at residues 173–233 (SINYNMNNNN…NNKTTDNINN (61 aa)) is disordered. A bZIP domain is found at 381 to 444 (KSTESIKKMN…SVDLMKPSND (64 aa)). Positions 387–403 (KKMNQNKASRNYRQKKK) are basic motif. Residues 406-413 (IKEIEDKL) form a leucine-zipper region.

This sequence belongs to the bZIP family.

It is found in the nucleus. Its function is as follows. Probable transcriptional regulator. This chain is Probable basic-leucine zipper transcription factor O (bzpO), found in Dictyostelium discoideum (Social amoeba).